Here is a 304-residue protein sequence, read N- to C-terminus: Plasmodesmata-located protein 3 (304 aa).

The first 26 residues, 1 to 26 (MGFYSLKQLLLLYIIIMALFSDLKLA), serve as a signal peptide directing secretion. The Extracellular segment spans residues 27-272 (KSSSPEYTNL…SSSSGTTGKT (246 aa)). 2 consecutive Gnk2-homologous domains span residues 34–138 (TNLI…ISGF) and 143–242 (GMEL…FYPN). 6 disulfides stabilise this stretch: Cys41/Cys116, Cys92/Cys101, Cys104/Cys129, Cys151/Cys220, Cys196/Cys205, and Cys208/Cys233. A helical membrane pass occupies residues 273-293 (VAIIVGGTAGVGFLVICLLFV). The interval 273 to 293 (VAIIVGGTAGVGFLVICLLFV) is necessary and sufficient for plasmodesmal targeting. The Cytoplasmic portion of the chain corresponds to 294–304 (KNLMKKKYDDY).

This sequence belongs to the cysteine-rich repeat secretory protein family. Plasmodesmata-located proteins (PDLD) subfamily. As to quaternary structure, (Microbial infection) Interacts with Grapevine fanleaf virus (GFLV) 2B-MP. Highly expressed in inflorescence pedacel and shoot apex. Expressed in the outermost L1 layer of the shoot apical meristem and in the epidermis of bulging floral primordia. Within the L1, expression was restricted to the peripheral zone (at protein level).

The protein localises to the cell membrane. It is found in the cell junction. Its subcellular location is the plasmodesma. Its function is as follows. Modulates cell-to-cell trafficking. In Arabidopsis thaliana (Mouse-ear cress), this protein is Plasmodesmata-located protein 3.